Consider the following 361-residue polypeptide: D-malate dehydrogenase [decarboxylating] (361 aa).

Residues D224, D248, and D252 each contribute to the Mn(2+) site.

Belongs to the isocitrate and isopropylmalate dehydrogenases family. Requires Mg(2+) as cofactor. It depends on Mn(2+) as a cofactor.

It is found in the cytoplasm. It carries out the reaction (R)-malate + NAD(+) = pyruvate + CO2 + NADH. In terms of biological role, catalyzes the NAD(+)-dependent oxidative decarboxylation of D-malate into pyruvate. Is essential for aerobic growth on D-malate as the sole carbon source. But is not required for anaerobic D-malate utilization, although DmlA is expressed and active in those conditions. Appears to be not able to use L-tartrate as a substrate for dehydrogenation instead of D-malate. The sequence is that of D-malate dehydrogenase [decarboxylating] (dmlA) from Escherichia coli (strain K12).